A 432-amino-acid polypeptide reads, in one-letter code: Keratin, type I cytoskeletal 17 (432 aa).

A disordered region spans residues Met-1 to Ser-24. The tract at residues Met-1–Gly-83 is head. Phosphoserine is present on residues Ser-12 and Ser-13. A Glycyl lysine isopeptide (Lys-Gly) (interchain with G-Cter in SUMO1); alternate cross-link involves residue Lys-15. Residue Lys-15 forms a Glycyl lysine isopeptide (Lys-Gly) (interchain with G-Cter in SUMO2); alternate linkage. A phosphoserine mark is found at Ser-25, Ser-32, and Ser-39. Residue Ser-44 is modified to Phosphoserine; by RPS6KA1. Residues Glu-84–Tyr-120 form a coil 1A region. One can recognise an IF rod domain in the interval Glu-84–Leu-395. The tract at residues Val-102–Ile-116 is peptide epitope S1; induces T-cell and keratinocyte proliferation and IFN-gamma production. Thr-110 is modified (phosphothreonine). Residues Gln-121–Ile-138 are linker 1. The interval Glu-139–Arg-230 is coil 1B. A peptide epitope S2; induces T-cell proliferation and IFN-gamma production region spans residues Ala-153–Asp-167. The interval Gly-231–Ser-250 is linker 12. A coil 2 region spans residues Arg-251 to Asp-392. Lys-278 is covalently cross-linked (Glycyl lysine isopeptide (Lys-Gly) (interchain with G-Cter in SUMO2)). Thr-279 carries the phosphothreonine modification. Ser-323 is subject to Phosphoserine. Residues Glu-332–Ile-346 form a peptide epitope S4; induces T-cell and keratinocyte proliferation and IFN-gamma production region. The tail stretch occupies residues Ala-393–Arg-432. Residues Lys-399, Lys-400, and Lys-419 each participate in a glycyl lysine isopeptide (Lys-Gly) (interchain with G-Cter in SUMO1); alternate cross-link. Residues Lys-399, Lys-400, and Lys-419 each participate in a glycyl lysine isopeptide (Lys-Gly) (interchain with G-Cter in SUMO2); alternate cross-link.

Belongs to the intermediate filament family. In terms of assembly, heterodimer of a type I and a type II keratin. KRT17 associates with KRT6 isomers (KRT6A or KRT6B). Interacts with TRADD and SFN. Phosphorylation at Ser-44 occurs in a growth- and stress-dependent fashion in skin keratinocytes, it has no effect on filament organization. In terms of tissue distribution, expressed in the outer root sheath and medulla region of hair follicle specifically from eyebrow and beard, digital pulp, nail matrix and nail bed epithelium, mucosal stratified squamous epithelia and in basal cells of oral epithelium, palmoplantar epidermis and sweat and mammary glands. Also expressed in myoepithelium of prostate, basal layer of urinary bladder, cambial cells of sebaceous gland and in exocervix (at protein level).

It localises to the cytoplasm. Its function is as follows. Type I keratin involved in the formation and maintenance of various skin appendages, specifically in determining shape and orientation of hair. Required for the correct growth of hair follicles, in particular for the persistence of the anagen (growth) state. Modulates the function of TNF-alpha in the specific context of hair cycling. Regulates protein synthesis and epithelial cell growth through binding to the adapter protein SFN and by stimulating Akt/mTOR pathway. Involved in tissue repair. May be a marker of basal cell differentiation in complex epithelia and therefore indicative of a certain type of epithelial 'stem cells'. Acts as a promoter of epithelial proliferation by acting a regulator of immune response in skin: promotes Th1/Th17-dominated immune environment contributing to the development of basaloid skin tumors. May act as an autoantigen in the immunopathogenesis of psoriasis, with certain peptide regions being a major target for autoreactive T-cells and hence causing their proliferation. This Homo sapiens (Human) protein is Keratin, type I cytoskeletal 17 (KRT17).